The sequence spans 107 residues: UPF0145 protein YbjQ (107 aa).

It belongs to the UPF0145 family.

The sequence is that of UPF0145 protein YbjQ from Shigella flexneri.